The primary structure comprises 493 residues: Guanosine-5'-triphosphate,3'-diphosphate pyrophosphatase (493 aa).

Belongs to the GppA/Ppx family. GppA subfamily.

It carries out the reaction guanosine 3'-diphosphate 5'-triphosphate + H2O = guanosine 3',5'-bis(diphosphate) + phosphate + H(+). It functions in the pathway purine metabolism; ppGpp biosynthesis; ppGpp from GTP: step 2/2. Its function is as follows. Catalyzes the conversion of pppGpp to ppGpp. Guanosine pentaphosphate (pppGpp) is a cytoplasmic signaling molecule which together with ppGpp controls the 'stringent response', an adaptive process that allows bacteria to respond to amino acid starvation, resulting in the coordinated regulation of numerous cellular activities. The sequence is that of Guanosine-5'-triphosphate,3'-diphosphate pyrophosphatase from Salmonella paratyphi B (strain ATCC BAA-1250 / SPB7).